Here is a 276-residue protein sequence, read N- to C-terminus: Undecaprenyl-diphosphatase (276 aa).

A run of 6 helical transmembrane segments spans residues Arg-43–Phe-63, Gly-85–Ile-105, Leu-109–Ala-129, Ala-183–Ser-203, Gly-214–Val-234, and Phe-249–Val-269.

Belongs to the UppP family.

The protein resides in the cell inner membrane. The enzyme catalyses di-trans,octa-cis-undecaprenyl diphosphate + H2O = di-trans,octa-cis-undecaprenyl phosphate + phosphate + H(+). Functionally, catalyzes the dephosphorylation of undecaprenyl diphosphate (UPP). Confers resistance to bacitracin. In Pseudomonas putida (strain ATCC 700007 / DSM 6899 / JCM 31910 / BCRC 17059 / LMG 24140 / F1), this protein is Undecaprenyl-diphosphatase.